We begin with the raw amino-acid sequence, 297 residues long: Small ribosomal subunit protein uS9m (297 aa).

The tract at residues Val278–Arg297 is disordered.

Belongs to the universal ribosomal protein uS9 family.

Its subcellular location is the mitochondrion. The polypeptide is Small ribosomal subunit protein uS9m (MRPS9) (Kluyveromyces lactis (strain ATCC 8585 / CBS 2359 / DSM 70799 / NBRC 1267 / NRRL Y-1140 / WM37) (Yeast)).